The sequence spans 349 residues: Phenylalanine--tRNA ligase alpha subunit (349 aa).

Glu258 is a binding site for Mg(2+).

The protein belongs to the class-II aminoacyl-tRNA synthetase family. Phe-tRNA synthetase alpha subunit type 1 subfamily. Tetramer of two alpha and two beta subunits. Mg(2+) serves as cofactor.

It localises to the cytoplasm. It carries out the reaction tRNA(Phe) + L-phenylalanine + ATP = L-phenylalanyl-tRNA(Phe) + AMP + diphosphate + H(+). This chain is Phenylalanine--tRNA ligase alpha subunit, found in Rickettsia canadensis (strain McKiel).